We begin with the raw amino-acid sequence, 98 residues long: NADH-ubiquinone oxidoreductase chain 4L (98 aa).

Helical transmembrane passes span 1-21 (MPII…GMLF), 29-49 (SLLC…LMAL), and 58-78 (IVPI…LALL).

Belongs to the complex I subunit 4L family. In terms of assembly, core subunit of respiratory chain NADH dehydrogenase (Complex I) which is composed of 45 different subunits.

The protein resides in the mitochondrion inner membrane. It carries out the reaction a ubiquinone + NADH + 5 H(+)(in) = a ubiquinol + NAD(+) + 4 H(+)(out). Core subunit of the mitochondrial membrane respiratory chain NADH dehydrogenase (Complex I) which catalyzes electron transfer from NADH through the respiratory chain, using ubiquinone as an electron acceptor. Part of the enzyme membrane arm which is embedded in the lipid bilayer and involved in proton translocation. The protein is NADH-ubiquinone oxidoreductase chain 4L (MT-ND4L) of Trachypithecus obscurus (Dusky leaf-monkey).